Here is a 475-residue protein sequence, read N- to C-terminus: Phosphoethanolamine N-methyltransferase 1 (475 aa).

Belongs to the class I-like SAM-binding methyltransferase superfamily.

The enzyme catalyses phosphoethanolamine + S-adenosyl-L-methionine = N-methylethanolamine phosphate + S-adenosyl-L-homocysteine + H(+). Its pathway is phospholipid metabolism; phosphatidylcholine biosynthesis; phosphocholine from phosphoethanolamine. Feedback inhibition by phosphatidylcholine. Functionally, catalyzes the first step in the synthesis of phosphocholine by converting phosphoethanolamine into phospho-monomethylethanolamine (N-methylethanolamine phosphate). Phosphocholine is a precursor for phosphatidylcholine, a major component in membranes and a precursor itself in the production of glycoconjugates secreted by parasitic nematodes to avoid host immune responses. The chain is Phosphoethanolamine N-methyltransferase 1 from Caenorhabditis elegans.